The chain runs to 130 residues: MKLFTGLILCSLVLGVHSQWMSFFGEAYEGAKDMWRAYSDMREANYKGADKYFHARGNYDAAQRGPGGAWAAKVISDARENIQRFTDPLFKGTTSGQGQEDSRADQAANEWGRSGKDPNHFRPAGLPDKY.

A signal peptide spans 1–18; the sequence is MKLFTGLILCSLVLGVHS. Position 19 is a pyrrolidone carboxylic acid (Q19). The segment at 86–130 is disordered; it reads TDPLFKGTTSGQGQEDSRADQAANEWGRSGKDPNHFRPAGLPDKY.

It belongs to the SAA family. This protein is the precursor of amyloid protein A, which is formed by the removal of residues from the C-terminal end. As to expression, expressed by the liver; secreted in plasma.

The protein localises to the secreted. Major acute phase reactant. Apolipoprotein of the HDL complex. The chain is Serum amyloid A protein (SAA1) from Bos taurus (Bovine).